The primary structure comprises 116 residues: Ly-6/neurotoxin-like protein 1 (116 aa).

A signal peptide spans 1 to 20 (MTHLLTVFLVALMGLPVAQA). The 84-residue stretch at 21-104 (LECHVCAYNG…GFATPVTLAL (84 aa)) folds into the UPAR/Ly6 domain. Intrachain disulfides connect cysteine 23/cysteine 46, cysteine 26/cysteine 33, cysteine 39/cysteine 64, cysteine 68/cysteine 85, and cysteine 86/cysteine 91. A lipid anchor (GPI-anchor amidated asparagine) is attached at asparagine 92. Positions 93–116 (GAGFATPVTLALVPALLATFWSLL) are cleaved as a propeptide — removed in mature form.

In terms of assembly, interacts with nAChRs containing alpha-4:beta-2 (CHRNA4:CHRNB2) and alpha-7 (CHRNA7) subunits. Interacts with CHRNA4 probably in the endoplasmic reticulum prior to nAChR pentameric assembly. Interacts with KCNA2/Potassium voltage-gated channel subfamily A member 2. As to expression, expressed in neurons of multiple regions in the CNS, including the cerebral cortex, thalamus, substantia nigra, cerebellum, amygdala and hippocampus. Also expressed in kidney, heart and thymus, but at lower levels than in the brain. Expressed in the primary visual cortex (V1) and the lateral geniculate nucleus (at protein level).

It is found in the cell membrane. It localises to the cell projection. Its subcellular location is the dendrite. The protein resides in the endoplasmic reticulum. Functionally, acts in different tissues through interaction to nicotinic acetylcholine receptors (nAChRs). The proposed role as modulator of nAChR activity seems to be dependent on the nAChR subtype and stoichiometry, and to involve an effect on nAChR trafficking and its cell surface expression, and on single channel properties of the nAChR inserted in the plasma membrane. Modulates functional properties of nicotinic acetylcholine receptors (nAChRs) to prevent excessive excitation, and hence neurodegeneration. Enhances desensitization by increasing both the rate and extent of desensitization of alpha-4:beta-2-containing nAChRs and slowing recovery from desensitization. Promotes large amplitude ACh-evoked currents through alpha-4:beta-2 nAChRs. Is involved in regulation of the nAChR pentameric assembly in the endoplasmic reticulum. Shifts stoichiometry from high sensitivity alpha-4(2):beta-2(3) to low sensitivity alpha-4(3):beta-2(2) nAChR. In vitro modulates alpha-3:beta-4-containing nAChRs. Reduces cell surface expression of (alpha-3:beta-4)(2):beta-4 and (alpha-3:beta-4)(2):alpha-5 nAChRs suggesting an interaction with nAChR alpha-3(-):(+)beta-4 subunit interfaces and an allosteric mode. Corresponding single channel effects characterized by decreased unitary conductance, altered burst proportions and enhanced desensitization/inactivation seem to depend on nAChR alpha:alpha subunit interfaces and are greater in (alpha-3:beta-2)(2):alpha-3 when compared to (alpha-3:beta-2)(2):alpha-5 nAChRs. Prevents plasticity in the primary visual cortex late in life. In Mus musculus (Mouse), this protein is Ly-6/neurotoxin-like protein 1.